Consider the following 184-residue polypeptide: Peptide deformylase (184 aa).

Fe cation-binding residues include Cys96 and His138. The active site involves Glu139. His142 is a binding site for Fe cation.

This sequence belongs to the polypeptide deformylase family. Fe(2+) serves as cofactor.

The catalysed reaction is N-terminal N-formyl-L-methionyl-[peptide] + H2O = N-terminal L-methionyl-[peptide] + formate. Removes the formyl group from the N-terminal Met of newly synthesized proteins. Requires at least a dipeptide for an efficient rate of reaction. N-terminal L-methionine is a prerequisite for activity but the enzyme has broad specificity at other positions. This chain is Peptide deformylase, found in Cytophaga hutchinsonii (strain ATCC 33406 / DSM 1761 / CIP 103989 / NBRC 15051 / NCIMB 9469 / D465).